A 305-amino-acid polypeptide reads, in one-letter code: Protein EXORDIUM-like 2 (305 aa).

A signal peptide spans 1 to 23; it reads MASNYRFAIFLTLFFATAGFSAA. N-linked (GlcNAc...) asparagine glycosylation occurs at asparagine 44.

The protein belongs to the EXORDIUM family.

The protein resides in the secreted. Its subcellular location is the extracellular space. The protein localises to the apoplast. Functionally, may play a role in a brassinosteroid-dependent regulation of growth and development. This is Protein EXORDIUM-like 2 (EXL2) from Arabidopsis thaliana (Mouse-ear cress).